A 442-amino-acid polypeptide reads, in one-letter code: Histidine--tRNA ligase (442 aa).

Belongs to the class-II aminoacyl-tRNA synthetase family. In terms of assembly, homodimer.

The protein localises to the cytoplasm. The catalysed reaction is tRNA(His) + L-histidine + ATP = L-histidyl-tRNA(His) + AMP + diphosphate + H(+). This Treponema pallidum (strain Nichols) protein is Histidine--tRNA ligase (hisS).